A 129-amino-acid polypeptide reads, in one-letter code: UPF0102 protein Cag_1992 (129 aa).

It belongs to the UPF0102 family.

This chain is UPF0102 protein Cag_1992, found in Chlorobium chlorochromatii (strain CaD3).